The primary structure comprises 151 residues: Ribosome maturation factor RimP (151 aa).

The protein belongs to the RimP family.

It is found in the cytoplasm. In terms of biological role, required for maturation of 30S ribosomal subunits. The polypeptide is Ribosome maturation factor RimP (Shewanella sp. (strain MR-4)).